A 371-amino-acid chain; its full sequence is Cytochrome b (371 aa).

The next 8 helical transmembrane spans lie at 25-45 (FGSM…FLAV), 69-90 (WMMQ…YIHI), 105-125 (WLSG…GXXX), 170-190 (XXXX…XXXX), 218-238 (YKDL…VSFL), 280-300 (LGGA…PFTH), 312-332 (IMQL…WAAT), and 339-358 (FTMI…IMNP). Positions 75 and 89 each coordinate heme b. 2 residues coordinate heme b: Xaa-174 and Xaa-188.

This sequence belongs to the cytochrome b family. The cytochrome bc1 complex contains 3 respiratory subunits (MT-CYB, CYC1 and UQCRFS1), 2 core proteins (UQCRC1 and UQCRC2) and probably 6 low-molecular weight proteins. Heme b serves as cofactor.

The protein resides in the mitochondrion inner membrane. In terms of biological role, component of the ubiquinol-cytochrome c reductase complex (complex III or cytochrome b-c1 complex) that is part of the mitochondrial respiratory chain. The b-c1 complex mediates electron transfer from ubiquinol to cytochrome c. Contributes to the generation of a proton gradient across the mitochondrial membrane that is then used for ATP synthesis. This chain is Cytochrome b (MT-CYB), found in Eryx tataricus (Tartar sand boa).